A 601-amino-acid chain; its full sequence is Glutathione-regulated potassium-efflux system protein KefB (601 aa).

The next 13 membrane-spanning stretches (helical) occupy residues 4–24, 29–49, 55–75, 87–107, 111–131, 152–172, 177–197, 207–227, 230–250, 262–282, 284–304, 324–344, and 356–376; these read ADLLTAGVLFLFAAVAAVPLA, IGAVLGYLLAGIAIGPWGLGF, EILHFSELGVVFLMFIIGLEL, IFGVGAAQVLLSAAVLAGLLM, FLWQAAVVGGIGLAMSSTAMA, VLLFQDLAVIPALALVPLLAG, HFDWFKVAMKVLAFAVMLIGG, FIAASGVREVFTAATLLLVLS, LFMDALGLSMALGTFIAGVLL, AIDPFKGLLLGLFFISVGMSL, LGVLYTHLLWVAASVVILVVI, MQFASVLSQGGEFAFVLFSTA, and ALLLVTVTLSMMTTPLLMKGI. Positions 400–519 constitute an RCK N-terminal domain; it reads KPQVIVVGFG…AGVTQFSRET (120 aa).

The protein belongs to the monovalent cation:proton antiporter 2 (CPA2) transporter (TC 2.A.37) family. KefB subfamily. Interacts with the regulatory subunit KefG.

The protein resides in the cell inner membrane. Its function is as follows. Pore-forming subunit of a potassium efflux system that confers protection against electrophiles. Catalyzes K(+)/H(+) antiport. The protein is Glutathione-regulated potassium-efflux system protein KefB of Salmonella enteritidis PT4 (strain P125109).